A 437-amino-acid polypeptide reads, in one-letter code: MSLFLDTARIEVKAGKGGDGAVAFRREKYVPDGGPAGGDGGKGGSVIFKVDEGMSTLMDFRYNRIFRGKPGEKGMNKGMHGRGAEDLIVHVPQGTTVKDNETGDVLVDLIEKDQEFAVAKGGRGGRGNIRFATPRNPAPEVAENGEPGEDKILLLELRVLADVGLVGFPSVGKSTLLSVVSNARPKIGAYHFTTITPNIGMVQVGYGDSFVMADMPGLIEGAHSGAGLGIQFLRHIERTRVLLHVLDMSELEGRDPYEDYKTINDELESYNLRLMERPQIIVANKMDMPEAAERLAEFKEKLAADLGPDKEMPEIFEVSGLTKTGLQGLLARTSELLAQTPEFLLYDEDELADETAYYGFEEEEKPFKVSRDDDGGWRLSGDKIERLFIMTNFDHDESVMKFARQMRAMGVDETLRSMGAKDGDYVRIQKFEFEFVD.

The Obg domain maps to 2 to 160 (SLFLDTARIE…KILLLELRVL (159 aa)). The OBG-type G domain occupies 161 to 338 (ADVGLVGFPS…LLARTSELLA (178 aa)). Residues 167–174 (GFPSVGKS), 192–196 (FTTIT), 214–217 (DMPG), 284–287 (NKMD), and 319–321 (SGL) contribute to the GTP site. Mg(2+)-binding residues include serine 174 and threonine 194. Residues 359–437 (GFEEEEKPFK…IQKFEFEFVD (79 aa)) enclose the OCT domain.

Belongs to the TRAFAC class OBG-HflX-like GTPase superfamily. OBG GTPase family. Monomer. It depends on Mg(2+) as a cofactor.

It is found in the cytoplasm. In terms of biological role, an essential GTPase which binds GTP, GDP and possibly (p)ppGpp with moderate affinity, with high nucleotide exchange rates and a fairly low GTP hydrolysis rate. Plays a role in control of the cell cycle, stress response, ribosome biogenesis and in those bacteria that undergo differentiation, in morphogenesis control. This Lactococcus lactis subsp. lactis (strain IL1403) (Streptococcus lactis) protein is GTPase Obg.